A 438-amino-acid polypeptide reads, in one-letter code: Thymidine phosphorylase (438 aa).

The protein belongs to the thymidine/pyrimidine-nucleoside phosphorylase family. In terms of assembly, homodimer.

The enzyme catalyses thymidine + phosphate = 2-deoxy-alpha-D-ribose 1-phosphate + thymine. It functions in the pathway pyrimidine metabolism; dTMP biosynthesis via salvage pathway; dTMP from thymine: step 1/2. In terms of biological role, the enzymes which catalyze the reversible phosphorolysis of pyrimidine nucleosides are involved in the degradation of these compounds and in their utilization as carbon and energy sources, or in the rescue of pyrimidine bases for nucleotide synthesis. This chain is Thymidine phosphorylase, found in Burkholderia orbicola (strain AU 1054).